The primary structure comprises 271 residues: Tryptophan synthase alpha chain (271 aa).

Residues glutamate 56 and aspartate 67 each act as proton acceptor in the active site.

This sequence belongs to the TrpA family. In terms of assembly, tetramer of two alpha and two beta chains.

The enzyme catalyses (1S,2R)-1-C-(indol-3-yl)glycerol 3-phosphate + L-serine = D-glyceraldehyde 3-phosphate + L-tryptophan + H2O. It participates in amino-acid biosynthesis; L-tryptophan biosynthesis; L-tryptophan from chorismate: step 5/5. In terms of biological role, the alpha subunit is responsible for the aldol cleavage of indoleglycerol phosphate to indole and glyceraldehyde 3-phosphate. This chain is Tryptophan synthase alpha chain, found in Mycobacterium intracellulare.